The primary structure comprises 355 residues: Vacuolar protein sorting-associated protein 37C (355 aa).

Ser29 carries the post-translational modification Phosphoserine. The VPS37 C-terminal domain occupies 78 to 167; that stretch reads VERCQEQKAK…RKPRASQELA (90 aa). The interval 159-355 is disordered; the sequence is KPRASQELAG…PPPGPAWPGY (197 aa). Pro residues-rich tracts occupy residues 170 to 186 and 194 to 214; these read APPP…PQGT and PQPP…PSLP. Residues 291-304 show a composition bias toward low complexity; that stretch reads APSPGYPQQSPYPA. Residues 321-355 show a composition bias toward pro residues; the sequence is PGQPQPSVPLQPPYPPGPAPPYGFPPPPGPAWPGY.

This sequence belongs to the VPS37 family. In terms of assembly, component of the ESCRT-I complex (endosomal sorting complex required for transport I) which consists of TSG101, VPS28, a VPS37 protein (VPS37A to -D) and MVB12A or MVB12B in a 1:1:1:1 stoichiometry. Interacts with TSG101, VPS28, MVB12A and MVB12B. Component of the ESCRT-I complex (endosomal sorting complex required for transport I) which consists of TSG101, VPS28, a VPS37 protein (VPS37A to -D) and UBAP1 in a 1:1:1:1 stoichiometry. Interacts with HGS and STAM2. Interacts with CEP55. In terms of processing, phosphorylated by TBK1.

It is found in the late endosome membrane. Its function is as follows. Component of the ESCRT-I complex, a regulator of vesicular trafficking process. Required for the sorting of endocytic ubiquitinated cargos into multivesicular bodies. May be involved in cell growth and differentiation. The chain is Vacuolar protein sorting-associated protein 37C (VPS37C) from Homo sapiens (Human).